Consider the following 256-residue polypeptide: Alcohol dehydrogenase (256 aa).

Position 12 to 35 (12 to 35 (FVAGLGGIGLDTSKELVKRDLKNL)) interacts with NAD(+). Residue Ser140 coordinates substrate. Catalysis depends on Tyr153, which acts as the Proton acceptor.

This sequence belongs to the short-chain dehydrogenases/reductases (SDR) family. As to quaternary structure, homodimer.

It carries out the reaction a primary alcohol + NAD(+) = an aldehyde + NADH + H(+). The enzyme catalyses a secondary alcohol + NAD(+) = a ketone + NADH + H(+). The sequence is that of Alcohol dehydrogenase (Adh) from Drosophila orena (Fruit fly).